The sequence spans 358 residues: MQKNDDLLRERRKDEHVALGVKQNEQLAPSSLEDIQLIGTSIPRYNVKDIDLTTTIVGTNVPFPLYINAMTGGSRHTKKINAELAEIAREVAIPMAVGSQSAALKNSSLIDTYKIVREINPNGMILANISPEVALQEGLRAIEMLEANALQIHINPAQELVMQEGDRSFSHWLTRIEEYVKLSPVPVVVKEVGFGMTRETVKTLADIGVQTVDLAGKGGTNFAQIENDRRRDQAYDFLLDWGISTGQALIDMQHQDAPKIAYLASGGIRNPLDIVKALALGADSVGMAGQIIYSLKKEGVTKTIEKLELWKEQLRGLFVLANAKNISELKTTPLIISGELAKWGALREIDLVKLANRK.

12–13 is a substrate binding site; that stretch reads RK. FMN is bound by residues 69-71, S99, and N128; that span reads AMT. Q158 contacts substrate. E159 contributes to the Mg(2+) binding site. FMN-binding positions include K190, T220, 267-269, and 288-289; these read GIR and AG.

Belongs to the IPP isomerase type 2 family. In terms of assembly, homooctamer. Dimer of tetramers. FMN is required as a cofactor. Requires NADPH as cofactor. It depends on Mg(2+) as a cofactor.

The protein localises to the cytoplasm. The enzyme catalyses isopentenyl diphosphate = dimethylallyl diphosphate. In terms of biological role, involved in the biosynthesis of isoprenoids. Catalyzes the 1,3-allylic rearrangement of the homoallylic substrate isopentenyl (IPP) to its allylic isomer, dimethylallyl diphosphate (DMAPP). In Listeria monocytogenes serotype 4b (strain F2365), this protein is Isopentenyl-diphosphate delta-isomerase.